The following is a 473-amino-acid chain: Ribulose bisphosphate carboxylase large chain 2 (473 aa).

Substrate is bound by residues Asn116 and Thr166. Lys168 acts as the Proton acceptor in catalysis. Residue Lys170 coordinates substrate. Mg(2+) contacts are provided by Lys194, Asp196, and Glu197. Lys194 bears the N6-carboxylysine mark. The active-site Proton acceptor is the His287. Positions 288, 320, and 372 each coordinate substrate.

It belongs to the RuBisCO large chain family. Type I subfamily. As to quaternary structure, heterohexadecamer of 8 large chains and 8 small chains. It depends on Mg(2+) as a cofactor.

The enzyme catalyses 2 (2R)-3-phosphoglycerate + 2 H(+) = D-ribulose 1,5-bisphosphate + CO2 + H2O. It carries out the reaction D-ribulose 1,5-bisphosphate + O2 = 2-phosphoglycolate + (2R)-3-phosphoglycerate + 2 H(+). Its function is as follows. RuBisCO catalyzes two reactions: the carboxylation of D-ribulose 1,5-bisphosphate, the primary event in carbon dioxide fixation, as well as the oxidative fragmentation of the pentose substrate. Both reactions occur simultaneously and in competition at the same active site. In Acidithiobacillus ferrooxidans (Thiobacillus ferrooxidans), this protein is Ribulose bisphosphate carboxylase large chain 2.